Consider the following 84-residue polypeptide: Small ribosomal subunit protein uS17c (84 aa).

Belongs to the universal ribosomal protein uS17 family. In terms of assembly, part of the 30S ribosomal subunit.

The protein localises to the plastid. It is found in the chloroplast. Functionally, one of the primary rRNA binding proteins, it binds specifically to the 5'-end of 16S ribosomal RNA. The protein is Small ribosomal subunit protein uS17c (rps17) of Phaeodactylum tricornutum (strain CCAP 1055/1).